The sequence spans 395 residues: Bifunctional fatty acid conjugase/Delta(12)-oleate desaturase (395 aa).

2 helical membrane-spanning segments follow: residues 73 to 93 (FALA…LPKP) and 97 to 117 (MAWP…WVIA). The short motif at 118–122 (HECGH) is the Histidine box-1 element. A helical transmembrane segment spans residues 130–150 (WVNDAVGFFLHTSLLVPYFPF). A Histidine box-2 motif is present at residues 154 to 158 (HRRHH). 3 helical membrane passes run 192 to 212 (VLTL…FNAS), 236 to 256 (FWVH…YRLA), and 264 to 284 (LLSI…LITF). The Histidine box-3 signature appears at 328–332 (HVIHH).

It belongs to the fatty acid desaturase type 1 family.

It localises to the membrane. It catalyses the reaction a (9Z,12Z)-octadecadienoyl-containing glycerolipid + 2 Fe(II)-[cytochrome b5] + O2 + 2 H(+) = a (9Z,11E,13Z)-octadeca-9,11,13-trienoyl-containing glycerolipid + 2 Fe(III)-[cytochrome b5] + 2 H2O. Its pathway is lipid metabolism; polyunsaturated fatty acid biosynthesis. Its function is as follows. Converts a single cis double bond at position 12 of linoleate incorporated into phosphatidylcholine into conjugated 11-trans and 13-cis double bonds. Produces punicic acid (18:3(9Z,11E,13Z)) from linoleic acid and conjugated octadecatetraenoic fatty acid from gamma-linolenic acid. No activity with cis- and trans-vaccenic acid, alpha-linolenic acid or homo-gamma-linolenic acid. 16:2(9Z,12Z), 18:3(9Z,12Z,15Z) and 18:2(9Z,12Z) are substrates for the conjugase to form trans-Delta(11) and cis-Delta(13) double bonds. No activity on the cis-Delta(9) double bonds of oleic and palmitoleic acids. This is Bifunctional fatty acid conjugase/Delta(12)-oleate desaturase from Punica granatum (Pomegranate).